Consider the following 577-residue polypeptide: MFS-type transporter pgmG (577 aa).

The segment at 1–32 (MSETVTQTETDQRPATARSLGAEEKEAKSDEQ) is disordered. Residues 21 to 31 (GAEEKEAKSDE) show a composition bias toward basic and acidic residues. The next 8 membrane-spanning stretches (helical) occupy residues 45–65 (FIVI…NTIV), 84–104 (WLSV…SKIY), 111–131 (WLYL…GAAP), 141–161 (ALAG…LSVN), 174–194 (TGLT…GFAV), 218–238 (PLTV…LFML), 259–279 (LGTI…NFGG), and 292–312 (CFVV…YCIG). N317 carries an N-linked (GlcNAc...) asparagine glycan. Residues 330–350 (FIILFVQTASVATVFFVPIYF) traverse the membrane as a helical segment. Residue N360 is glycosylated (N-linked (GlcNAc...) asparagine). A run of 5 helical transmembrane segments spans residues 363 to 383 (AIDA…AMIL), 395 to 415 (MPWY…MYTI), 426 to 446 (GYMI…FAVA), 457 to 477 (VATG…LAIA), and 532 to 552 (ISQV…LAIF).

The protein belongs to the major facilitator superfamily. TCR/Tet family.

Its subcellular location is the membrane. In terms of biological role, MFS-type transporter; part of the gene cluster that mediates the biosynthesis of pleosporalin A, ascomycone A, as well as a third cryptic naphthoquinone derived pigment, all responsible for the coloration of conidia. Seems not to be involved in pigment biosynthesis although its expression is regulated by the cluster-specific transcription factor pgmR. This Aspergillus terreus (strain NIH 2624 / FGSC A1156) protein is MFS-type transporter pgmG.